A 101-amino-acid polypeptide reads, in one-letter code: Small ribosomal subunit protein uS14 (101 aa).

It belongs to the universal ribosomal protein uS14 family. Part of the 30S ribosomal subunit. Contacts proteins S3 and S10.

In terms of biological role, binds 16S rRNA, required for the assembly of 30S particles and may also be responsible for determining the conformation of the 16S rRNA at the A site. In Phenylobacterium zucineum (strain HLK1), this protein is Small ribosomal subunit protein uS14.